The primary structure comprises 124 residues: V-type proton ATPase subunit F 1 (124 aa).

Belongs to the V-ATPase F subunit family. In terms of assembly, V-ATPase is a heteromultimeric enzyme made up of two complexes: the ATP-hydrolytic V1 complex and the proton translocation V0 complex. The V1 complex consists of three catalytic AB heterodimers that form a heterohexamer, three peripheral stalks each consisting of EG heterodimers, one central rotor including subunits D and F, and the regulatory subunits C and H. The proton translocation complex V0 consists of the proton transport subunit a, a ring of proteolipid subunits c9c'', rotary subunit d, subunits e and f, and the accessory subunits VhaAC45 and ATP6AP2.

Its function is as follows. Subunit of the V1 complex of vacuolar(H+)-ATPase (V-ATPase), a multisubunit enzyme composed of a peripheral complex (V1) that hydrolyzes ATP and a membrane integral complex (V0) that translocates protons. V-ATPase is responsible for acidifying and maintaining the pH of intracellular compartments and in some cell types, is targeted to the plasma membrane, where it is responsible for acidifying the extracellular environment. In Drosophila pseudoobscura pseudoobscura (Fruit fly), this protein is V-type proton ATPase subunit F 1 (Vha14).